A 66-amino-acid polypeptide reads, in one-letter code: Large ribosomal subunit protein uL29 (66 aa).

It belongs to the universal ribosomal protein uL29 family.

This Bacillus licheniformis (strain ATCC 14580 / DSM 13 / JCM 2505 / CCUG 7422 / NBRC 12200 / NCIMB 9375 / NCTC 10341 / NRRL NRS-1264 / Gibson 46) protein is Large ribosomal subunit protein uL29.